Consider the following 123-residue polypeptide: Small ribosomal subunit protein uS12 (123 aa).

Residues 1–22 (MATINQLVRQPRKRSVEKSDVP) are disordered. D89 bears the 3-methylthioaspartic acid mark. Positions 100 to 123 (GSLDTSGVKGRNQGRSKYGTKRPK) are disordered. Over residues 111–123 (NQGRSKYGTKRPK) the composition is skewed to basic residues.

This sequence belongs to the universal ribosomal protein uS12 family. As to quaternary structure, part of the 30S ribosomal subunit. Contacts proteins S8 and S17. May interact with IF1 in the 30S initiation complex.

In terms of biological role, with S4 and S5 plays an important role in translational accuracy. Its function is as follows. Interacts with and stabilizes bases of the 16S rRNA that are involved in tRNA selection in the A site and with the mRNA backbone. Located at the interface of the 30S and 50S subunits, it traverses the body of the 30S subunit contacting proteins on the other side and probably holding the rRNA structure together. The combined cluster of proteins S8, S12 and S17 appears to hold together the shoulder and platform of the 30S subunit. The protein is Small ribosomal subunit protein uS12 of Pseudomonas putida (strain GB-1).